A 322-amino-acid chain; its full sequence is Ribosomal RNA small subunit methyltransferase H (322 aa).

S-adenosyl-L-methionine is bound by residues 40-42 (GGH), D60, F84, D106, and Q113.

Belongs to the methyltransferase superfamily. RsmH family.

The protein localises to the cytoplasm. It catalyses the reaction cytidine(1402) in 16S rRNA + S-adenosyl-L-methionine = N(4)-methylcytidine(1402) in 16S rRNA + S-adenosyl-L-homocysteine + H(+). Its function is as follows. Specifically methylates the N4 position of cytidine in position 1402 (C1402) of 16S rRNA. The chain is Ribosomal RNA small subunit methyltransferase H from Mannheimia succiniciproducens (strain KCTC 0769BP / MBEL55E).